A 272-amino-acid polypeptide reads, in one-letter code: Bis(5'-nucleosyl)-tetraphosphatase, symmetrical (272 aa).

This sequence belongs to the Ap4A hydrolase family.

The enzyme catalyses P(1),P(4)-bis(5'-adenosyl) tetraphosphate + H2O = 2 ADP + 2 H(+). In terms of biological role, hydrolyzes diadenosine 5',5'''-P1,P4-tetraphosphate to yield ADP. The protein is Bis(5'-nucleosyl)-tetraphosphatase, symmetrical of Chromohalobacter salexigens (strain ATCC BAA-138 / DSM 3043 / CIP 106854 / NCIMB 13768 / 1H11).